The sequence spans 945 residues: Collagen-like protein 1 (945 aa).

Disordered regions lie at residues Ser80–Leu226 and Gly257–Glu441. 2 Collagen-like domains span residues Gly83–Lys142 and Gly146–Lys205. Composition is skewed to basic and acidic residues over residues Gln109 to Gln145 and Asp168 to Lys208. Asn211 carries an N-linked (GlcNAc...) asparagine; by host glycan. Collagen-like domains follow at residues Gly257 to Lys376, Gly383 to Asn442, Gly488 to Lys547, Gly554 to Val613, and Gly635 to Ser694. The N-linked (GlcNAc...) asparagine; by host glycan is linked to Asn442. The segment covering Gly488–Asp687 has biased composition (basic and acidic residues). The disordered stretch occupies residues Gly488–Ser712. The span at Ser703–Ser712 shows a compositional bias: polar residues. N-linked (GlcNAc...) asparagine; by host glycosylation is present at Asn716. The tract at residues Thr733–Ser768 is disordered. Positions Lys736–Thr754 are enriched in basic and acidic residues. Residues Asp756–Thr765 are compositionally biased toward low complexity.

May be hydroxylated on lysine by the viral-encoded procollagen-lysine,2-oxoglutarate 5-dioxygenase.

Its subcellular location is the virion. May participate in the formation of a layer of cross-linked glycosylated fibrils at the viral surface thus giving it a hairy-like appearance. The protein is Collagen-like protein 1 of Acanthamoeba polyphaga mimivirus (APMV).